Here is a 219-residue protein sequence, read N- to C-terminus: uncharacterized protein (219 aa).

The interval 42 to 71 is disordered; it reads RQPRVVPVTSSDPEVVDDEDDEDQSDDSDE. Residues 45–54 show a composition bias toward low complexity; it reads RVVPVTSSDP. Positions 55-71 are enriched in acidic residues; that stretch reads EVVDDEDDEDQSDDSDE.

This is an uncharacterized protein from Dryophytes versicolor (chameleon treefrog).